Consider the following 83-residue polypeptide: Mu-theraphotoxin-Hhn2e (83 aa).

An N-terminal signal peptide occupies residues 1–21 (MKASMFLALAGLVLLFVVGYA). A propeptide spanning residues 22-48 (SESEEKEFPRELLSKIFAVDDFKGEER) is cleaved from the precursor. Intrachain disulfides connect Cys50–Cys65, Cys57–Cys70, and Cys64–Cys77. A Leucine amide modification is found at Leu81.

This sequence belongs to the neurotoxin 10 (Hwtx-1) family. 15 (Hntx-3) subfamily. In terms of assembly, monomer. Expressed by the venom gland.

The protein resides in the secreted. Its function is as follows. Lethal neurotoxin. Selectively blocks tetrodotoxin-sensitive voltage-gated sodium channels (Nav). Does not affect tetrodotoxin-resistant voltage-gated sodium channels or calcium channels. The chain is Mu-theraphotoxin-Hhn2e from Cyriopagopus hainanus (Chinese bird spider).